Reading from the N-terminus, the 336-residue chain is MAIKVAINGFGRIGRLAFRRIQDVEGLEVVAVNDLTDDDMLAHLLKYDTMQGRFTGEVEVIEGGFRVNGKEIKSFDEPDAGKLPWGDLDIDVVLECTGFYTDKEKAQAHIDAGAKKVLISAPAKGDVKTIVFNTNHDTLDGSETVVSGASCTTNSLAPVAKVLSDEFGLVEGFMTTIHAYTGDQNTQDAPHRKGDKRRARAAAENIIPNSTGAAKAIGKVIPEIDGKLDGGAQRVPVATGSLTELTVVLDKQDVTVDQVNSAMKQASDESFGYTEDEIVSSDIVGMTYGSLFDATQTRVMTVGDRQLVKVAAWYDNEMSYTAQLVRTLAHLAELSK.

NAD(+) is bound by residues 12–13, D34, and S120; that span reads RI. D-glyceraldehyde 3-phosphate contacts are provided by residues 150-152, T181, R198, 211-212, and R234; these read SCT and TG. C151 functions as the Nucleophile in the catalytic mechanism. N316 provides a ligand contact to NAD(+).

The protein belongs to the glyceraldehyde-3-phosphate dehydrogenase family. As to quaternary structure, homotetramer.

Its subcellular location is the cytoplasm. It catalyses the reaction D-glyceraldehyde 3-phosphate + phosphate + NAD(+) = (2R)-3-phospho-glyceroyl phosphate + NADH + H(+). It participates in carbohydrate degradation; glycolysis; pyruvate from D-glyceraldehyde 3-phosphate: step 1/5. Functionally, catalyzes the oxidative phosphorylation of glyceraldehyde 3-phosphate (G3P) to 1,3-bisphosphoglycerate (BPG) using the cofactor NAD. The first reaction step involves the formation of a hemiacetal intermediate between G3P and a cysteine residue, and this hemiacetal intermediate is then oxidized to a thioester, with concomitant reduction of NAD to NADH. The reduced NADH is then exchanged with the second NAD, and the thioester is attacked by a nucleophilic inorganic phosphate to produce BPG. This Staphylococcus epidermidis (strain ATCC 35984 / DSM 28319 / BCRC 17069 / CCUG 31568 / BM 3577 / RP62A) protein is Glyceraldehyde-3-phosphate dehydrogenase 1 (gapA1).